A 158-amino-acid chain; its full sequence is Flagellar assembly factor FliW (158 aa).

It belongs to the FliW family. Interacts with translational regulator CsrA and flagellin(s).

It localises to the cytoplasm. Its function is as follows. Acts as an anti-CsrA protein, binds CsrA and prevents it from repressing translation of its target genes, one of which is flagellin. Binds to flagellin and participates in the assembly of the flagellum. The sequence is that of Flagellar assembly factor FliW from Moorella thermoacetica (strain ATCC 39073 / JCM 9320).